The primary structure comprises 374 residues: Ferroptosis suppressor protein 1 (374 aa).

Gly-2 is lipidated: N-myristoyl glycine. Residues 13–35 (VVIVGGGFAGIAAATQLKSFGIP) traverse the membrane as a helical segment. 6-hydroxy-FAD is bound by residues 17 to 21 (GGGFA), Arg-53, and Val-81. Lys-167 is subject to N6-acetyllysine. Asp-285 is a 6-hydroxy-FAD binding site.

Belongs to the FAD-dependent oxidoreductase family. 6-hydroxy-FAD is required as a cofactor. N-myristoylation at Gly-2 mediates the recruitment to lipid droplets and plasma membrane. In terms of processing, acetylation at Lys-167 prevents AIFM2 ubiquitination and degradation, thereby inhibiting ferroptosis. KAT2B mediates acetylation at Lys-167, while HDAC3 removes it. Post-translationally, ubiquitinated. AIFM2 undergoes 'Lys-29'-ubiquitination and proteasomal degradation, which is inhibited by acetylation at Lys-167.

Its subcellular location is the lipid droplet. The protein resides in the cell membrane. The protein localises to the cytoplasm. It localises to the mitochondrion membrane. It is found in the nucleus. The enzyme catalyses ubiquinone-10 + NADH + H(+) = ubiquinol-10 + NAD(+). It carries out the reaction phylloquinone + NADH + H(+) = phylloquinol + NAD(+). It catalyses the reaction menaquinone-4 + NADH + H(+) = menaquinol-4 + NAD(+). The catalysed reaction is menadione + NADH + H(+) = menadiol + NAD(+). The modification by 4-hydroxy-2-nonenal (HNE) adduction in mitochondria results in loss of the oxidoreductase activity and activation of a novel function in mitochondrial oxidative stress signaling. In terms of biological role, a NAD(P)H-dependent oxidoreductase that acts as a key inhibitor of ferroptosis. At the plasma membrane, catalyzes reduction of coenzyme Q/ubiquinone-10 to ubiquinol-10, a lipophilic radical-trapping antioxidant that prevents lipid oxidative damage and consequently ferroptosis. Acts in parallel to GPX4 to suppress phospholipid peroxidation and ferroptosis. This anti-ferroptotic function is independent of cellular glutathione levels. Also acts as a potent radical-trapping antioxidant by mediating warfarin-resistant vitamin K reduction in the canonical vitamin K cycle: catalyzes NAD(P)H-dependent reduction of vitamin K (phylloquinone, menaquinone-4 and menadione) to hydroquinone forms. Hydroquinones act as potent radical-trapping antioxidants inhibitor of phospholipid peroxidation and ferroptosis. May play a role in mitochondrial stress signaling. Upon oxidative stress, associates with the lipid peroxidation end product 4-hydroxy-2-nonenal (HNE) forming a lipid adduct devoid of oxidoreductase activity, which then translocates from mitochondria into the nucleus triggering DNA damage and cell death. The protein is Ferroptosis suppressor protein 1 (aifm2) of Xenopus tropicalis (Western clawed frog).